The chain runs to 326 residues: Aspartate carbamoyltransferase catalytic subunit (326 aa).

Carbamoyl phosphate is bound by residues arginine 65 and threonine 66. Lysine 93 is an L-aspartate binding site. Carbamoyl phosphate is bound by residues arginine 115, histidine 143, and glutamine 146. Residues arginine 176 and arginine 230 each contribute to the L-aspartate site. 2 residues coordinate carbamoyl phosphate: glycine 271 and proline 272.

The protein belongs to the aspartate/ornithine carbamoyltransferase superfamily. ATCase family. Heterododecamer (2C3:3R2) of six catalytic PyrB chains organized as two trimers (C3), and six regulatory PyrI chains organized as three dimers (R2).

The enzyme catalyses carbamoyl phosphate + L-aspartate = N-carbamoyl-L-aspartate + phosphate + H(+). It participates in pyrimidine metabolism; UMP biosynthesis via de novo pathway; (S)-dihydroorotate from bicarbonate: step 2/3. Its function is as follows. Catalyzes the condensation of carbamoyl phosphate and aspartate to form carbamoyl aspartate and inorganic phosphate, the committed step in the de novo pyrimidine nucleotide biosynthesis pathway. The protein is Aspartate carbamoyltransferase catalytic subunit of Mesorhizobium japonicum (strain LMG 29417 / CECT 9101 / MAFF 303099) (Mesorhizobium loti (strain MAFF 303099)).